A 305-amino-acid chain; its full sequence is MSSLVTQIDLDKINHSQSTVKDYILLMKPRVMSLVMFTGFVGMWLAPYSVHPFIAVIVLACISLGAGSAGAINMWYDRDIDSLMKRTQKRPLVRGAIEPDEALSFGLITGFFAVFFMALCVNLLASFLLLFTIFYYICIYTIWLKRRSIQNIVIGGVSGALPPVIGYAAVSNTISLESIILFLIIFIWTPPHSWALALFCNDDYKNCKVPMMPTVKGILYTKEQILIYSILLFLVSLMPFFIGMNNFIYLIIAGMLGLVFLYYSGSLFYDTPDNKQAKRLFAYSIFYLFFIFLLLSSTSTISNIS.

The next 9 membrane-spanning stretches (helical) occupy residues 31-51, 52-72, 102-119, 123-145, 151-171, 179-199, 218-238, 240-260, and 281-301; these read VMSL…YSVH, PFIA…AGAI, ALSF…FMAL, LLAS…IWLK, NIVI…AAVS, IILF…LALF, ILYT…VSLM, FFIG…GLVF, and FAYS…TSTI.

Belongs to the UbiA prenyltransferase family. Protoheme IX farnesyltransferase subfamily.

It is found in the cell inner membrane. It catalyses the reaction heme b + (2E,6E)-farnesyl diphosphate + H2O = Fe(II)-heme o + diphosphate. It functions in the pathway porphyrin-containing compound metabolism; heme O biosynthesis; heme O from protoheme: step 1/1. In terms of biological role, converts heme B (protoheme IX) to heme O by substitution of the vinyl group on carbon 2 of heme B porphyrin ring with a hydroxyethyl farnesyl side group. The chain is Protoheme IX farnesyltransferase from Rickettsia akari (strain Hartford).